The chain runs to 306 residues: Acetaldehyde dehydrogenase 2/3 (306 aa).

Catalysis depends on Cys-130, which acts as the Acyl-thioester intermediate. Residues 161–169 (SAGPGTRKN) and Asn-272 each bind NAD(+).

Belongs to the acetaldehyde dehydrogenase family.

The catalysed reaction is acetaldehyde + NAD(+) + CoA = acetyl-CoA + NADH + H(+). This Azoarcus sp. (strain BH72) protein is Acetaldehyde dehydrogenase 2/3 (mhpF).